A 124-amino-acid polypeptide reads, in one-letter code: Small ribosomal subunit protein uS12 (124 aa).

Residue Asp89 is modified to 3-methylthioaspartic acid. Residues 105–124 (QGVKNRKQARSRYGAKKEKS) form a disordered region. A compositionally biased stretch (basic residues) spans 108 to 118 (KNRKQARSRYG).

Belongs to the universal ribosomal protein uS12 family. In terms of assembly, part of the 30S ribosomal subunit. Contacts proteins S8 and S17. May interact with IF1 in the 30S initiation complex.

Its function is as follows. With S4 and S5 plays an important role in translational accuracy. In terms of biological role, interacts with and stabilizes bases of the 16S rRNA that are involved in tRNA selection in the A site and with the mRNA backbone. Located at the interface of the 30S and 50S subunits, it traverses the body of the 30S subunit contacting proteins on the other side and probably holding the rRNA structure together. The combined cluster of proteins S8, S12 and S17 appears to hold together the shoulder and platform of the 30S subunit. In Mycobacteroides abscessus (strain ATCC 19977 / DSM 44196 / CCUG 20993 / CIP 104536 / JCM 13569 / NCTC 13031 / TMC 1543 / L948) (Mycobacterium abscessus), this protein is Small ribosomal subunit protein uS12.